The following is a 576-amino-acid chain: MPKAGEQARQGGCCGSLANYLTSAKFLLYLGHSLSTWGDRMWHFAVSVFLVELYGNSLLLTAVYGLVVAGSVLVLGAIIGDWVDKNARLKVAQTSLVVQNVSVILCGIILMMVFLHKNELLTMYHGWVLTFCYILIITIADVANLASTATAITIQRDWIVVVAGGDRSKLADMNATIRRIDQLTNILAPMAVGQIMTFGSAVIGCGFISGWNLVSMCVEYFLLWKVYQKTPALAVKAALKVEEAELKQLNLHKETEPKPLEGTHLMGEKDPNVHELEHEQEPSCASQMAEPFRTFRDGWVSYYNQSVFLAGMGLAFLYMTVLGFDCITTGYAYTQGLSGSILSILMGASAITGIMGTVAFTWLRRKCGLVRTGLISGFAQLSCLILCVISVFMPGSPLDLSVSPFEDIRSRFIQAEPLSTMTPTKVPEIIFTTEMHMSNGSDPAGIFPETTPKSVPIISVSLLFAGVIAARIGLWSFDLTVTQLLQENVIESERGIINGVQNSMNYLLDLLHFIMVILAPNPEAFGLLVLISVSFVAMGHIMYFRFAQKTLGSKLFACGADDEEVTNENQANTSVV.

The Cytoplasmic portion of the chain corresponds to 1–23 (MPKAGEQARQGGCCGSLANYLTS). Residues 24-53 (AKFLLYLGHSLSTWGDRMWHFAVSVFLVEL) traverse the membrane as a helical segment. Residues Asp-39 and His-43 each coordinate Fe cation. Topologically, residues 54–57 (YGNS) are extracellular. A helical membrane pass occupies residues 58-84 (LLLTAVYGLVVAGSVLVLGAIIGDWVD). Residues 85–87 (KNA) are Cytoplasmic-facing. The chain crosses the membrane as a helical span at residues 88–118 (RLKVAQTSLVVQNVSVILCGIILMMVFLHKN). The Extracellular segment spans residues 119–126 (ELLTMYHG). The chain crosses the membrane as a helical span at residues 127–162 (WVLTFCYILIITIADVANLASTATAITIQRDWIVVV). At 163 to 164 (AG) the chain is on the cytoplasmic side. The chain crosses the membrane as a helical span at residues 165–195 (GDRSKLADMNATIRRIDQLTNILAPMAVGQI). Residues 196-202 (MTFGSAV) lie on the Extracellular side of the membrane. Residues 203-229 (IGCGFISGWNLVSMCVEYFLLWKVYQK) traverse the membrane as a helical segment. The Cytoplasmic segment spans residues 230–306 (TPALAVKAAL…DGWVSYYNQS (77 aa)). A helical membrane pass occupies residues 307-333 (VFLAGMGLAFLYMTVLGFDCITTGYAY). Cys-326 contacts Fe cation. The Extracellular segment spans residues 334–338 (TQGLS). A helical membrane pass occupies residues 339 to 366 (GSILSILMGASAITGIMGTVAFTWLRRK). Over 367-368 (CG) the chain is Cytoplasmic. A helical transmembrane segment spans residues 369–391 (LVRTGLISGFAQLSCLILCVISV). The Extracellular portion of the chain corresponds to 392–458 (FMPGSPLDLS…ETTPKSVPII (67 aa)). Asn-439 carries an N-linked (GlcNAc...) asparagine glycan. A helical membrane pass occupies residues 459-488 (SVSLLFAGVIAARIGLWSFDLTVTQLLQEN). Residues 489–493 (VIESE) lie on the Cytoplasmic side of the membrane. A helical membrane pass occupies residues 494 to 518 (RGIINGVQNSMNYLLDLLHFIMVIL). His-512 contributes to the Fe cation binding site. The Extracellular portion of the chain corresponds to 519 to 521 (APN). A helical membrane pass occupies residues 522–547 (PEAFGLLVLISVSFVAMGHIMYFRFA). The Cytoplasmic segment spans residues 548 to 576 (QKTLGSKLFACGADDEEVTNENQANTSVV).

This sequence belongs to the ferroportin (FP) (TC 2.A.100) family. SLC40A subfamily. As to quaternary structure, identified in a complex with STOM. Interacts with HAMP; affinity of the peptide hormone HAMP for SLC40A1 increases by 80-fold in the presence of iron and the interaction promotes SLC40A1 ubiquitination and degradation. Part of a complex composed of SLC40A1/ferroportin, TF/transferrin and HEPH/hephaestin that transfers iron from cells to transferrin. Post-translationally, polyubiquitinated by RNF217; leading to proteasomal degradation. Under conditions of high systemic iron levels, both the hormone peptide hepcidin/HAMP and holo(iron bound)-transferrin/TF induce the ubiquitination, internalization and proteasomal degradation of SLC40A1 to control iron release from cells.

The protein resides in the cell membrane. It localises to the basolateral cell membrane. It catalyses the reaction Fe(2+)(in) = Fe(2+)(out). Its activity is regulated as follows. During elevated serum iron levels, liver-derived hepcidin/HAMP negatively regulates cell surface ferroportin/SLC40A1 by inducing its ubiquitination, internalization, and degradation. Indeed, hepcidin/HAMP affinity towards ferroportin/SLC40A1 increases by 80-fold in the presence of iron. Functionally, transports Fe(2+) from the inside of a cell to the outside of the cell, playing a key role for maintaining systemic iron homeostasis. Transports iron from intestinal, splenic, hepatic cells, macrophages and erythrocytes into the blood to provide iron to other tissues. Controls therefore dietary iron uptake, iron recycling by macrophages and erythrocytes, and release of iron stores in hepatocytes. When iron is in excess in serum, circulating HAMP/hepcidin levels increase resulting in a degradation of SLC40A1, thus limiting the iron efflux to plasma. In Canis lupus familiaris (Dog), this protein is Ferroportin.